The primary structure comprises 178 residues: Large ribosomal subunit protein uL6 (178 aa).

It belongs to the universal ribosomal protein uL6 family. Part of the 50S ribosomal subunit.

This protein binds to the 23S rRNA, and is important in its secondary structure. It is located near the subunit interface in the base of the L7/L12 stalk, and near the tRNA binding site of the peptidyltransferase center. The polypeptide is Large ribosomal subunit protein uL6 (Streptococcus pneumoniae (strain JJA)).